The sequence spans 387 residues: Sorting nexin-7 (387 aa).

The region spanning 30–151 is the PX domain; that stretch reads KDLFITVDEP…IFLTAQAWEL (122 aa). A 1,2-diacyl-sn-glycero-3-phospho-(1D-myo-inositol-3-phosphate) contacts are provided by Arg73, Gln75, Lys103, and Arg117. The BAR domain maps to 178–387; the sequence is GVKNRPEEFM…HLEEASEDKP (210 aa).

This sequence belongs to the sorting nexin family. As to quaternary structure, heterodimer; heterodimerizes with SNX4.

The protein localises to the early endosome membrane. In terms of biological role, involved in the regulation of endocytosis and in several stages of intracellular trafficking. Together with SNX4, involved in autophagosome assembly by regulating trafficking and recycling of phospholipid scramblase ATG9A. This is Sorting nexin-7 from Homo sapiens (Human).